The primary structure comprises 224 residues: Oxalate oxidase GF-2.8 (224 aa).

The first 23 residues, 1–23, serve as a signal peptide directing secretion; the sequence is MGYSKTLVAGLFAMLLLAPAVLA. Cys-33 and Cys-49 form a disulfide bridge. The Cupin type-1 domain occupies 63–214; the sequence is SKLAKAGNTS…ALRVEARVVE (152 aa). Asn-70 and Asn-75 each carry an N-linked (GlcNAc...) asparagine glycan. The Mn(2+) site is built by His-111, His-113, Glu-118, and His-160.

This sequence belongs to the germin family. Oligomer (believed to be a pentamer but probably hexamer).

The protein localises to the secreted. It localises to the extracellular space. Its subcellular location is the apoplast. The protein resides in the cytoplasm. It is found in the cell wall. It catalyses the reaction oxalate + O2 + 2 H(+) = H2O2 + 2 CO2. Functionally, produces developmental and stress-related release of hydrogen peroxide in the apoplast. May play an important role in several aspects of plant growth and defense mechanisms. In Triticum aestivum (Wheat), this protein is Oxalate oxidase GF-2.8.